Reading from the N-terminus, the 660-residue chain is Solute carrier family 5 member 4 (660 aa).

Topologically, residues 1 to 28 are cytoplasmic; sequence MASTLSPSTVTKTPGPPEISERIQNAAD. A helical membrane pass occupies residues 29-47; the sequence is ISVIVIYFVVVMAVGLWAM. The Extracellular portion of the chain corresponds to 48–64; it reads LRTNRGTVGGFFLAGRD. Residues 65-85 form a helical membrane-spanning segment; the sequence is VTWWPMGASLFASNIGSGHFV. The Cytoplasmic segment spans residues 86–105; sequence GLAGTGAASGIAIAAFEWNA. The chain crosses the membrane as a helical span at residues 106 to 126; the sequence is LLLLLVLGWFFVPIYIKAGVM. Over 127-171 the chain is Extracellular; that stretch reads TMPEYLRKRFGGKRLQIYLSILSLFICVALRISSDIFSGAIFIKL. The helical transmembrane segment at 172 to 191 threads the bilayer; the sequence is ALGLDLYLAIFSLLAITAIY. Residues 192 to 208 are Cytoplasmic-facing; that stretch reads TITGGLASVIYTDTLQT. The chain crosses the membrane as a helical span at residues 209–229; sequence IIMLIGSFILMGFAFVEVGGY. Topologically, residues 230–270 are extracellular; it reads ESFTEKYMNAIPTIVEGDNLTISPKCYTPQGDSFHIFRDAV. Asn-248 carries N-linked (GlcNAc...) asparagine glycosylation. Residues 271–291 traverse the membrane as a helical segment; that stretch reads TGDIPWPGMIFGMTVVAAWYW. At 292 to 314 the chain is on the cytoplasmic side; it reads CTDQVIVQRCLSGKDMSHVKAAC. A helical transmembrane segment spans residues 315 to 334; sequence IMCGYLKLLPMFLMVMPGMI. Residues 335–423 lie on the Extracellular side of the membrane; it reads SRILYTEKVA…RKQASEKELL (89 aa). The chain crosses the membrane as a helical span at residues 424 to 443; it reads IAGRLFIILLIVISIVWVPL. At 444 to 455 the chain is on the cytoplasmic side; sequence VQVAQNGQLFHY. Residues 456–476 form a helical membrane-spanning segment; it reads IESISSYLGPPIAAVFLLAIF. Residues 477 to 526 are Extracellular-facing; the sequence is CKRVNEQGAFWGLIIGFVMGLIRMIAEFVYGTGSCLAASNCPQIICGVHY. Residues 527–547 form a helical membrane-spanning segment; it reads LYFALILFFVSILVVLAISLL. Over 548–638 the chain is Cytoplasmic; it reads TKPIPDVHLY…TDTSEKPLWK (91 aa). Residues 639–659 traverse the membrane as a helical segment; it reads TIVNINAILLLAVAVFVHGYF.

Belongs to the sodium:solute symporter (SSF) (TC 2.A.21) family. In terms of tissue distribution, kidney, intestine, liver, skeletal muscle and spleen.

The protein localises to the cell membrane. The enzyme catalyses D-glucose(out) + 2 Na(+)(out) = D-glucose(in) + 2 Na(+)(in). With respect to regulation, inhibited by phlorizin. Functionally, low-affinity sodium/D-glucose symporter with a great selectivity for sugars (D-glucose &gt;&gt; D-galactose). Na(+) and D-glucose transport are tightly coupled at neutral pH, but at acidic pH, ion transport is uncoupled from sugar transport. This Sus scrofa (Pig) protein is Solute carrier family 5 member 4.